The chain runs to 65 residues: Large ribosomal subunit protein bL35c (65 aa).

The protein belongs to the bacterial ribosomal protein bL35 family.

The protein localises to the plastid. It localises to the cyanelle. This Cyanophora paradoxa protein is Large ribosomal subunit protein bL35c (rpl35).